The primary structure comprises 242 residues: uncharacterized protein (242 aa).

Residues 17–85 (QRVDERIATT…HGSGSVVRDP (69 aa)) form the HTH gntR-type domain. The H-T-H motif DNA-binding region spans 45–64 (ERDLAERLGVNRTSLRQGLA).

This is an uncharacterized protein from Mycobacterium tuberculosis (strain ATCC 25618 / H37Rv).